The primary structure comprises 323 residues: Mitochondrial glutamate carrier 1 (323 aa).

3 Solcar repeats span residues 6–93 (ISLP…FRHQ), 101–214 (LTLP…LNQL), and 223–312 (SPFY…GIAE). Transmembrane regions (helical) follow at residues 12–32 (LING…IDLA), 62–82 (YFGM…EKAI), 107–127 (MLAG…MEML), 189–209 (GLGA…PLFA), 223–243 (SPFY…AVAV), and 292–312 (ALVI…GIAE).

It belongs to the mitochondrial carrier (TC 2.A.29) family. As to expression, detected in insulin-secreting beta-cells and pancreatic islets (at the protein level).

It localises to the mitochondrion inner membrane. The catalysed reaction is L-glutamate(in) + H(+)(in) = L-glutamate(out) + H(+)(out). Mitochondrial glutamate/H(+) symporter. Responsible for the transport of glutamate from the cytosol into the mitochondrial matrix with the concomitant import of a proton. Plays a role in the control of glucose-stimulated insulin secretion. This Rattus norvegicus (Rat) protein is Mitochondrial glutamate carrier 1.